The primary structure comprises 58 residues: Large ribosomal subunit protein uL30 (58 aa).

The protein belongs to the universal ribosomal protein uL30 family. Part of the 50S ribosomal subunit.

The polypeptide is Large ribosomal subunit protein uL30 (Bacteroides fragilis (strain ATCC 25285 / DSM 2151 / CCUG 4856 / JCM 11019 / LMG 10263 / NCTC 9343 / Onslow / VPI 2553 / EN-2)).